The sequence spans 261 residues: Tyrosine phosphatase-like protein H5 (261 aa).

The Tyrosine-protein phosphatase domain occupies 26 to 261; sequence LIKKEHDKVL…ESVEQEYFVP (236 aa).

The protein belongs to the protein-tyrosine phosphatase family.

The sequence is that of Tyrosine phosphatase-like protein H5 (H6) from Microplitis demolitor bracovirus (isolate Webb) (MdBV).